The chain runs to 1004 residues: MLRNAAAGARKAVTELSQFPKPGEKLHGFTLVRSKHVPELELTALHLQHDKTGADYLHIARDDSNNVFSIGFKTNPPDDTGIPHILEHTTLCGSEKYPIRDPFFKMLPRTLSNFMNAFTASDHTFYPFATTNAQDFKNLMSVYLDSTLHPLLKKSDFTQEGWRIGPENPLAEDEASKKLVFKGVVYNEMKGQMSDAGYLYYIRFHDHIFPDINNSGGDPQKITDLTYEQLQKFHAEHYHPSNAKVFTYGDMPLIDHLKQVDTQLQAFEKIQGDKQVHEPVTLNGPKEVTLYGPLDPLVDQDRQYKTSVSWIMGDTTDVLESFSLALLSTLLMDGYGSPLYRGLIEAGMGADWSPNAGYDSSAKKGIFSIGLTGVQEGDVPKLKEKVQQILRDARNKGFDKTKIDGSLHQLELSLKHKTANFGFSMLNRLKPKWFNGVDPFDSLAWNDTINGFQAKMAEGNYLEGLIDKYLLNDNTLTFTMAPSTTYGEDLVKEEQERLSTRIQAAIKEAGSEEKARKHFEKQEQELLVEQNKTNTEDLGCLPTVHVKDIPRSKEAVVVRDENANGTKIQWHEAPTNGLTYFRAINTLENLPDELRELVPLFTDSIMRLGTKDLNMEQLEDLIKLKTGGVSVGYHCTPSPTDFHAASEGIIFTGMALDHNVPVMFDIIQKLVLGTDFDSPEAALRIRQLLQASADGVVNDIASTGHRFAMGSAESGLTRSAWLRQQVSGLSQVQLVTSLASRPETDKLEDVISKLKQIQNLALVGGNLRTAITCGSESVAANGASLQNFVGNLSRDPLNLKNPSPRQLPKDSKTFYPLPYQVYYGGLSLPTTSYTSAEGAPLQILSQLLTHKHLHHEIREKGGAYGGGAYSRALDGLFGFYSYRDPNPQNTLSIMRNAGQWAVDKKWSDRDLEEAKISVFQGVDAPKSVNQEGMGRFLSGITEEMKQKKREQFLDVTKDQVREAAQRYLVDGLAKGEGRVAFLGEKQAWVDGEWQIREMDVKGAE.

Residues 1 to 34 constitute a mitochondrion transit peptide; the sequence is MLRNAAAGARKAVTELSQFPKPGEKLHGFTLVRS. His-84 contacts Zn(2+). The Proton acceptor role is filled by Glu-87. His-88 contributes to the Zn(2+) binding site. Residue Glu-160 is part of the active site. Glu-188 is a binding site for Zn(2+).

Belongs to the peptidase M16 family. PreP subfamily. Monomer and homodimer; homodimerization is induced by binding of the substrate. It depends on Zn(2+) as a cofactor.

The protein resides in the mitochondrion intermembrane space. Its subcellular location is the mitochondrion matrix. Its function is as follows. Degrades mitochondrial transit peptides after their cleavage in the intermembrane space or in the matrix, and presequence peptides; clearance of these peptides is required to keep the presequence processing machinery running. Preferentially cleaves the N-terminal side of paired basic amino acid residues. Also degrades other unstructured peptides. May function as an ATP-dependent peptidase as opposed to a metalloendopeptidase. The protein is Presequence protease, mitochondrial (CYM1) of Gibberella zeae (strain ATCC MYA-4620 / CBS 123657 / FGSC 9075 / NRRL 31084 / PH-1) (Wheat head blight fungus).